The primary structure comprises 446 residues: CBL-interacting serine/threonine-protein kinase 24 (446 aa).

In terms of domain architecture, Protein kinase spans 11 to 264 (YEVGRTIGEG…IQGIKKDPWF (254 aa)). Residues 17-25 (IGEGTFAKV) and K40 each bind ATP. D134 functions as the Proton acceptor in the catalytic mechanism. The tract at residues 152-179 (DFGLSALPQEGVELLRTTCGTPNYVAPE) is activation loop. Phosphoserine is present on S156. At T168 the chain carries Phosphothreonine. An NAF domain is found at 305–329 (EGPLMMNAFEMITLSQGLNLSALFD). The segment at 336–365 (KRQTRFVSRREPSEIIANIEAVANSMGFKS) is PPI.

This sequence belongs to the protein kinase superfamily. CAMK Ser/Thr protein kinase family. SNF1 subfamily. Interacts with CBL1, CBL2, CBL4/SOS3, CBL5, CBL9, CBL10 and with the protein phosphatase 2C ABI2. Requires Mn(2+) as cofactor. In terms of processing, autophosphorylated.

The protein localises to the cytoplasm. Its subcellular location is the nucleus. The enzyme catalyses L-seryl-[protein] + ATP = O-phospho-L-seryl-[protein] + ADP + H(+). It catalyses the reaction L-threonyl-[protein] + ATP = O-phospho-L-threonyl-[protein] + ADP + H(+). Functionally, involved in the regulatory pathway for the control of intracellular Na(+) and K(+) homeostasis and salt tolerance. Activates the vacuolar H(+)/Ca(2+) antiporter CAX1 and operates in synergy with CBL4/SOS3 to activate the plasma membrane Na(+)/H(+) antiporter SOS1. CIPK serine-threonine protein kinases interact with CBL proteins. Binding of a CBL protein to the regulatory NAF domain of CIPK protein lead to the activation of the kinase in a calcium-dependent manner. Phosphorylates CBL1, CBL4 and CBL10. This is CBL-interacting serine/threonine-protein kinase 24 (CIPK24) from Arabidopsis thaliana (Mouse-ear cress).